The chain runs to 429 residues: 3-phosphoshikimate 1-carboxyvinyltransferase (429 aa).

The 3-phosphoshikimate site is built by Lys23, Ser24, and Arg28. Lys23 provides a ligand contact to phosphoenolpyruvate. Positions 95 and 123 each coordinate phosphoenolpyruvate. The 3-phosphoshikimate site is built by Ser168, Gln170, Asp316, and Lys343. Residue Gln170 participates in phosphoenolpyruvate binding. Asp316 functions as the Proton acceptor in the catalytic mechanism. Positions 347 and 389 each coordinate phosphoenolpyruvate.

It belongs to the EPSP synthase family. In terms of assembly, monomer.

It is found in the cytoplasm. The catalysed reaction is 3-phosphoshikimate + phosphoenolpyruvate = 5-O-(1-carboxyvinyl)-3-phosphoshikimate + phosphate. It participates in metabolic intermediate biosynthesis; chorismate biosynthesis; chorismate from D-erythrose 4-phosphate and phosphoenolpyruvate: step 6/7. Its function is as follows. Catalyzes the transfer of the enolpyruvyl moiety of phosphoenolpyruvate (PEP) to the 5-hydroxyl of shikimate-3-phosphate (S3P) to produce enolpyruvyl shikimate-3-phosphate and inorganic phosphate. The protein is 3-phosphoshikimate 1-carboxyvinyltransferase of Bacillus cereus (strain G9842).